Consider the following 509-residue polypeptide: Maturase K (509 aa).

This sequence belongs to the intron maturase 2 family. MatK subfamily.

The protein localises to the plastid. It is found in the chloroplast. Its function is as follows. Usually encoded in the trnK tRNA gene intron. Probably assists in splicing its own and other chloroplast group II introns. In Cicer arietinum (Chickpea), this protein is Maturase K.